A 550-amino-acid chain; its full sequence is Glutamine--tRNA ligase (550 aa).

The 'HIGH' region motif lies at 34–44; that stretch reads PEPNGYLHLGH. Residues 35-37 and 41-47 each bind ATP; these read EPN and HLGHAKS. 2 residues coordinate L-glutamine: aspartate 67 and tyrosine 212. Residues threonine 231, 261-262, and 269-271 contribute to the ATP site; these read RL and LSK. The 'KMSKS' region signature appears at 268–272; the sequence is VLSKR.

The protein belongs to the class-I aminoacyl-tRNA synthetase family. In terms of assembly, monomer.

It is found in the cytoplasm. The enzyme catalyses tRNA(Gln) + L-glutamine + ATP = L-glutaminyl-tRNA(Gln) + AMP + diphosphate. This is Glutamine--tRNA ligase from Buchnera aphidicola subsp. Baizongia pistaciae (strain Bp).